A 249-amino-acid polypeptide reads, in one-letter code: MIVTNDQELEGLKKIGRIVALAREEMKRKAEPGMSTKDLDLIGKAVLDEHGAVSAPEKEYDFPGVTCISVNDEVAHGIPSTSKILKAGDLVNIDISAEFGGFYSDTGISFVLGEGEERLHKLCQCAENAFQKGLQQAKAGKRQNQIGRAVYHEARSQGFTVIKTLTGHGIGRSLHEAPNHIMNYYDPFDNALFKNGTVIALEPFISTKAETIVEAGDGWTFKTPDKSMVAQVEHTIVITKDEPIILTKL.

H76 lines the substrate pocket. A divalent metal cation-binding residues include D94, D105, and H168. H175 serves as a coordination point for substrate. A divalent metal cation is bound by residues E202 and E233.

In terms of assembly, monomer. Co(2+) serves as cofactor. Requires Zn(2+) as cofactor. Mn(2+) is required as a cofactor. It depends on Fe(2+) as a cofactor.

The protein localises to the cytoplasm. The enzyme catalyses Release of N-terminal amino acids, preferentially methionine, from peptides and arylamides.. Its function is as follows. Removes the N-terminal methionine from nascent proteins. The N-terminal methionine is often cleaved when the second residue in the primary sequence is small and uncharged (Met-Ala-, Cys, Gly, Pro, Ser, Thr, or Val). Requires deformylation of the N(alpha)-formylated initiator methionine before it can be hydrolyzed. This is Methionine aminopeptidase 2 from Bacillus subtilis (strain 168).